A 448-amino-acid chain; its full sequence is Ribulose bisphosphate carboxylase large chain (448 aa).

Positions M1–S2 are excised as a propeptide. The residue at position 3 (P3) is an N-acetylproline. At K14 the chain carries N6,N6,N6-trimethyllysine. The substrate site is built by N122 and T172. The active-site Proton acceptor is K174. K176 provides a ligand contact to substrate. Residues K200, D202, and E203 each coordinate Mg(2+). N6-carboxylysine is present on K200. Residue H293 is the Proton acceptor of the active site. R294, H326, and S378 together coordinate substrate.

This sequence belongs to the RuBisCO large chain family. Type I subfamily. As to quaternary structure, heterohexadecamer of 8 large chains and 8 small chains; disulfide-linked. The disulfide link is formed within the large subunit homodimers. The cofactor is Mg(2+). In terms of processing, the disulfide bond which can form in the large chain dimeric partners within the hexadecamer appears to be associated with oxidative stress and protein turnover.

It is found in the plastid. Its subcellular location is the chloroplast. It catalyses the reaction 2 (2R)-3-phosphoglycerate + 2 H(+) = D-ribulose 1,5-bisphosphate + CO2 + H2O. It carries out the reaction D-ribulose 1,5-bisphosphate + O2 = 2-phosphoglycolate + (2R)-3-phosphoglycerate + 2 H(+). In terms of biological role, ruBisCO catalyzes two reactions: the carboxylation of D-ribulose 1,5-bisphosphate, the primary event in carbon dioxide fixation, as well as the oxidative fragmentation of the pentose substrate in the photorespiration process. Both reactions occur simultaneously and in competition at the same active site. This chain is Ribulose bisphosphate carboxylase large chain, found in Dichapetalum crassifolium.